The following is a 222-amino-acid chain: Ornithine decarboxylase antizyme 1 (222 aa).

It belongs to the ODC antizyme family. In terms of assembly, interacts with ODC1 and thereby sterically blocks ODC homodimerization. Forms a ternary complex with PSMB4 and OAZ1 before PSMB4 is incorporated into the 20S proteasome. Interacts with AZIN2; this interaction disrupts the interaction between the antizyme and ODC1. Interacts with FAM171A1.

Functionally, ornithine decarboxylase (ODC) antizyme protein that negatively regulates ODC activity and intracellular polyamine biosynthesis and uptake in response to increased intracellular polyamine levels. Binds to ODC monomers, inhibiting the assembly of the functional ODC homodimer, and targets the monomers for ubiquitin-independent proteolytic destruction by the 26S proteasome. Triggers ODC degradation by inducing the exposure of a cryptic proteasome-interacting surface of ODC. Stabilizes AZIN2 by interfering with its ubiquitination. Also inhibits cellular uptake of polyamines by inactivating the polyamine uptake transporter. SMAD1/OAZ1/PSMB4 complex mediates the degradation of the CREBBP/EP300 repressor SNIP1. Involved in the translocation of AZIN2 from ER-Golgi intermediate compartment (ERGIC) to the cytosol. The sequence is that of Ornithine decarboxylase antizyme 1 (OAZ1) from Mesocricetus auratus (Golden hamster).